A 273-amino-acid polypeptide reads, in one-letter code: 3-methyl-2-oxobutanoate hydroxymethyltransferase (273 aa).

Mg(2+) contacts are provided by aspartate 53 and aspartate 92. 3-methyl-2-oxobutanoate-binding positions include 53 to 54 (DS), aspartate 92, and lysine 122. Residue glutamate 124 coordinates Mg(2+). Glutamate 191 (proton acceptor) is an active-site residue.

The protein belongs to the PanB family. In terms of assembly, homodecamer; pentamer of dimers. Mg(2+) is required as a cofactor.

It localises to the cytoplasm. It carries out the reaction 3-methyl-2-oxobutanoate + (6R)-5,10-methylene-5,6,7,8-tetrahydrofolate + H2O = 2-dehydropantoate + (6S)-5,6,7,8-tetrahydrofolate. The protein operates within cofactor biosynthesis; (R)-pantothenate biosynthesis; (R)-pantoate from 3-methyl-2-oxobutanoate: step 1/2. Functionally, catalyzes the reversible reaction in which hydroxymethyl group from 5,10-methylenetetrahydrofolate is transferred onto alpha-ketoisovalerate to form ketopantoate. The polypeptide is 3-methyl-2-oxobutanoate hydroxymethyltransferase (Bacteroides thetaiotaomicron (strain ATCC 29148 / DSM 2079 / JCM 5827 / CCUG 10774 / NCTC 10582 / VPI-5482 / E50)).